We begin with the raw amino-acid sequence, 183 residues long: Acyl-homoserine-lactone synthase (183 aa).

The protein belongs to the autoinducer synthase family.

It catalyses the reaction a fatty acyl-[ACP] + S-adenosyl-L-methionine = an N-acyl-L-homoserine lactone + S-methyl-5'-thioadenosine + holo-[ACP] + H(+). Involved in the synthesis of the acyl-homoserine lactone (AHL) signal N-(3-hydroxydodecanoyl)-L-HSL (3-hydroxy-C(12)-HSL or OH-dDHL). Probably part of a quorum-sensing system with AnoR. The chain is Acyl-homoserine-lactone synthase from Acinetobacter nosocomialis.